Here is a 705-residue protein sequence, read N- to C-terminus: Elongation factor G (705 aa).

In terms of domain architecture, tr-type G spans 8 to 290; the sequence is EKYRNIGICA…GVVEYLPAPN (283 aa). Residues 17–24, 88–92, and 142–145 contribute to the GTP site; these read AHVDAGKT, DTPGH, and NKMD.

The protein belongs to the TRAFAC class translation factor GTPase superfamily. Classic translation factor GTPase family. EF-G/EF-2 subfamily.

It localises to the cytoplasm. Functionally, catalyzes the GTP-dependent ribosomal translocation step during translation elongation. During this step, the ribosome changes from the pre-translocational (PRE) to the post-translocational (POST) state as the newly formed A-site-bound peptidyl-tRNA and P-site-bound deacylated tRNA move to the P and E sites, respectively. Catalyzes the coordinated movement of the two tRNA molecules, the mRNA and conformational changes in the ribosome. This is Elongation factor G from Francisella philomiragia subsp. philomiragia (strain ATCC 25017 / CCUG 19701 / FSC 153 / O#319-036).